The sequence spans 517 residues: Diacylglycerol O-acyltransferase 1C (517 aa).

Residues 1 to 82 (MAISDVPAAA…NVGAAANDAG (82 aa)) are disordered. The span at 8 to 17 (AAAGTTATTT) shows a compositional bias: low complexity. Over residues 53 to 64 (ITDDDNIKDHKP) the composition is skewed to basic and acidic residues. Residues 71–81 (DDNVGAAANDA) show a composition bias toward low complexity. 7 helical membrane passes run 121–141 (HAGLFNLCIVVLVAVNSRLII), 165–185 (WPLFMCCLSLAIFPLAAFVVE), 197–217 (VVVLLHLIISTVELCYPVLVI), 222–242 (SAFVSGVTLMLLTCIVWLKLV), 272–292 (YPYTVTFRSLAYFMVAPTLCY), 305–325 (GWVFRQLVKLIIFTGVMGFII), and 361–381 (VWLCMFYCFFHLWLNILAELV). The FYXDWWN motif signature appears at 388–394 (FYKDWWN). Helical transmembrane passes span 429–449 (GAASLIAFLVSAVFHELCIAV), 451–471 (CHMFKLWAFIGIMFQVPLVLI), and 484–504 (VGNMIFWFIFCILGQPMSVLL). H443 is a catalytic residue.

It belongs to the membrane-bound acyltransferase family. Sterol o-acyltransferase subfamily.

It localises to the endoplasmic reticulum membrane. It catalyses the reaction an acyl-CoA + a 1,2-diacyl-sn-glycerol = a triacyl-sn-glycerol + CoA. The protein operates within glycerolipid metabolism; triacylglycerol biosynthesis. Functionally, involved in triacylglycerol (TAG) synthesis. Catalyzes the acylation of the sn-3 hydroxy group of sn-1,2-diacylglycerol using acyl-CoA. In Glycine max (Soybean), this protein is Diacylglycerol O-acyltransferase 1C.